The chain runs to 728 residues: Prolyl 3-hydroxylase 1 (728 aa).

A signal peptide spans 1 to 14; sequence MVAVAAAAASRATA. TPR repeat units lie at residues 25–58, 135–168, 197–230, and 293–326; these read PDLL…RAAL, RSPY…NPEH, HMHE…YFVA, and PSHY…FPND. Asparagine 308 carries N-linked (GlcNAc...) asparagine glycosylation. Residues 393–431 are a coiled coil; it reads KRLQEKQKSERETAVRISQEIGNLMKEIETLVEEKTKES. N-linked (GlcNAc...) asparagine glycosylation is found at asparagine 450, asparagine 459, and asparagine 532. The region spanning 556 to 670 is the Fe2OG dioxygenase domain; it reads SHLVCRTAIE…RCAIALWFTL (115 aa). Histidine 579, aspartate 581, and histidine 651 together coordinate Fe cation. Arginine 661 is an active-site residue. The tract at residues 691-728 is disordered; that stretch reads SPEEVDLPQEQPLPDQQGSPKPGEESLSDRESQPKDEL. Residues 698-707 are compositionally biased toward low complexity; the sequence is PQEQPLPDQQ. The span at 712–728 shows a compositional bias: basic and acidic residues; sequence PGEESLSDRESQPKDEL. The Prevents secretion from ER motif lies at 725-728; it reads KDEL.

The protein belongs to the leprecan family. Fe cation is required as a cofactor. The cofactor is L-ascorbate. O-glycosylated; chondroitin sulfate. In terms of tissue distribution, expressed in basement membranes of cardiac muscle, skeletal muscle, central nervous system, intestinal tract, trachea, ear, skin, liver and kidney. In kidney, localizes to the glomerular basement membrane, mesangial matrix and Bowman's capsule of the nephron. In the renal parenchyma, expressed in the basement membranes of tubules and blood vessels. In the ear and trachea, localizes to the perimeter of resident chondrocytes in lacunae.

The protein localises to the endoplasmic reticulum. The protein resides in the secreted. Its subcellular location is the extracellular space. It is found in the extracellular matrix. The enzyme catalyses L-prolyl-[collagen] + 2-oxoglutarate + O2 = trans-3-hydroxy-L-prolyl-[collagen] + succinate + CO2. Basement membrane-associated chondroitin sulfate proteoglycan (CSPG). Has prolyl 3-hydroxylase activity catalyzing the post-translational formation of 3-hydroxyproline in -Xaa-Pro-Gly- sequences in collagens, especially types IV and V. May be involved in the secretory pathway of cells. Has growth suppressive activity in fibroblasts. The chain is Prolyl 3-hydroxylase 1 from Rattus norvegicus (Rat).